The chain runs to 697 residues: Potassium-transporting ATPase ATP-binding subunit (697 aa).

The next 4 helical transmembrane spans lie at 55–75, 79–99, 245–265, and 271–291; these read PIMF…FLPS, SIPG…VLFA, LTLI…YLGF, and VLVA…LSAI. Aspartate 324 functions as the 4-aspartylphosphate intermediate in the catalytic mechanism. Residues aspartate 361, glutamate 365, 393-400, and lysine 412 each bind ATP; that span reads FKAETRMS. Aspartate 535 and aspartate 539 together coordinate Mg(2+). The next 3 membrane-spanning stretches (helical) occupy residues 605–625, 633–653, and 677–697; these read FAII…LNIM, AILS…PLAM, and GGVI…GLFI.

Belongs to the cation transport ATPase (P-type) (TC 3.A.3) family. Type IA subfamily. As to quaternary structure, the system is composed of three essential subunits: KdpA, KdpB and KdpC.

It localises to the cell membrane. The catalysed reaction is K(+)(out) + ATP + H2O = K(+)(in) + ADP + phosphate + H(+). In terms of biological role, part of the high-affinity ATP-driven potassium transport (or Kdp) system, which catalyzes the hydrolysis of ATP coupled with the electrogenic transport of potassium into the cytoplasm. This subunit is responsible for energy coupling to the transport system and for the release of the potassium ions to the cytoplasm. In Bacillus cereus (strain ZK / E33L), this protein is Potassium-transporting ATPase ATP-binding subunit.